The primary structure comprises 152 residues: Large ribosomal subunit protein bL9 (152 aa).

Belongs to the bacterial ribosomal protein bL9 family.

Binds to the 23S rRNA. This Corynebacterium urealyticum (strain ATCC 43042 / DSM 7109) protein is Large ribosomal subunit protein bL9.